We begin with the raw amino-acid sequence, 204 residues long: Octanoyltransferase (204 aa).

The BPL/LPL catalytic domain occupies 30–204; it reads CETPDEIWLL…QSFINQLTDV (175 aa). Residues 69 to 76, 136 to 138, and 149 to 151 contribute to the substrate site; these read RGGQITYH, SLG, and GIA. The active-site Acyl-thioester intermediate is C167.

It belongs to the LipB family.

The protein localises to the cytoplasm. It carries out the reaction octanoyl-[ACP] + L-lysyl-[protein] = N(6)-octanoyl-L-lysyl-[protein] + holo-[ACP] + H(+). The protein operates within protein modification; protein lipoylation via endogenous pathway; protein N(6)-(lipoyl)lysine from octanoyl-[acyl-carrier-protein]: step 1/2. Its function is as follows. Catalyzes the transfer of endogenously produced octanoic acid from octanoyl-acyl-carrier-protein onto the lipoyl domains of lipoate-dependent enzymes. Lipoyl-ACP can also act as a substrate although octanoyl-ACP is likely to be the physiological substrate. This is Octanoyltransferase from Nitrosomonas europaea (strain ATCC 19718 / CIP 103999 / KCTC 2705 / NBRC 14298).